Consider the following 161-residue polypeptide: Probable metalloprotease HVO_1016 (161 aa).

Residues Val-10–Val-131 enclose the MPN domain. Glu-31 (proton donor/acceptor) is an active-site residue. Zn(2+) is bound by residues His-87, His-89, and Asp-100. The JAMM motif motif lies at His-87–Asp-100.

This sequence belongs to the peptidase M67B family. In terms of assembly, monomer and homodimer. The cofactor is Zn(2+).

Functionally, probable metalloprotease. Does not hydrolyze SAMP1- and SAMP2-protein conjugates, diglycine-AMC, Ub-AMC, hemoglobin, cytochrome c, carbonic anhydrase, creatinine phosphokinase, beta-amylase and bovine serum albumin. The protein is Probable metalloprotease HVO_1016 of Haloferax volcanii (strain ATCC 29605 / DSM 3757 / JCM 8879 / NBRC 14742 / NCIMB 2012 / VKM B-1768 / DS2) (Halobacterium volcanii).